The chain runs to 357 residues: Protein RecA (357 aa).

69-76 (GPESSGKT) is an ATP binding site. The tract at residues 337-357 (SANSVAKNNEDDEDEDVEEEE) is disordered. The span at 346–357 (EDDEDEDVEEEE) shows a compositional bias: acidic residues.

Belongs to the RecA family.

The protein localises to the cytoplasm. In terms of biological role, can catalyze the hydrolysis of ATP in the presence of single-stranded DNA, the ATP-dependent uptake of single-stranded DNA by duplex DNA, and the ATP-dependent hybridization of homologous single-stranded DNAs. It interacts with LexA causing its activation and leading to its autocatalytic cleavage. In Nostoc sp. (strain PCC 7120 / SAG 25.82 / UTEX 2576), this protein is Protein RecA.